The following is a 226-amino-acid chain: ATP-dependent dethiobiotin synthetase BioD (226 aa).

Residue 12–17 (GVGKTV) coordinates ATP. T16 is a binding site for Mg(2+). K37 is a catalytic residue. Residue T41 participates in substrate binding. ATP contacts are provided by residues D49, 108 to 111 (EGAG), and 169 to 170 (GS). Residues D49 and E108 each coordinate Mg(2+).

The protein belongs to the dethiobiotin synthetase family. In terms of assembly, homodimer. Requires Mg(2+) as cofactor.

It localises to the cytoplasm. It carries out the reaction (7R,8S)-7,8-diammoniononanoate + CO2 + ATP = (4R,5S)-dethiobiotin + ADP + phosphate + 3 H(+). The protein operates within cofactor biosynthesis; biotin biosynthesis; biotin from 7,8-diaminononanoate: step 1/2. Functionally, catalyzes a mechanistically unusual reaction, the ATP-dependent insertion of CO2 between the N7 and N8 nitrogen atoms of 7,8-diaminopelargonic acid (DAPA, also called 7,8-diammoniononanoate) to form a ureido ring. The chain is ATP-dependent dethiobiotin synthetase BioD from Mycobacterium marinum (strain ATCC BAA-535 / M).